The chain runs to 125 residues: Small ribosomal subunit protein bS6 (125 aa).

The tract at residues 96–125 is disordered; sequence ETGASSMMKTVEREEARKASQAEFAAANER. Positions 105–115 are enriched in basic and acidic residues; it reads TVEREEARKAS.

Belongs to the bacterial ribosomal protein bS6 family.

Functionally, binds together with bS18 to 16S ribosomal RNA. This is Small ribosomal subunit protein bS6 from Paracidovorax citrulli (strain AAC00-1) (Acidovorax citrulli).